A 468-amino-acid polypeptide reads, in one-letter code: H(+)/Cl(-) exchange transporter ClcA (468 aa).

Residues 1 to 30 (MSTRETFKISLLAKMPKDVINQFLSKDKTP) lie on the Cytoplasmic side of the membrane. Residues 31–67 (FSVLFLSLLVGILAGLVGTYFEQAVHLVSETRTDWLK) traverse the membrane as a helical segment. The Periplasmic segment spans residues 68–74 (SEIGSFL). A helical transmembrane segment spans residues 75-98 (PLWLAAFLISAFLAFIGYFLVHRF). The Selectivity filter part_1 signature appears at 104–108 (GSGIP). Residue S105 participates in chloride binding. An intramembrane region (helical) is located at residues 107–114 (IPEIEGAM). Residues 115-121 (DGMRPVR) lie on the Cytoplasmic side of the membrane. Helical transmembrane passes span 122–139 (WWRV…ALGS) and 146–164 (EGPT…SDIF). Residues 144–148 (GREGP) carry the Selectivity filter part_2 motif. Over 165–174 (RVKNEDTRHS) the chain is Cytoplasmic. 2 consecutive intramembrane regions (helical) follow at residues 175–187 (LLAA…LAAA) and 191–199 (PLAGIMFVI). The Cytoplasmic segment spans residues 200-212 (EEMRPQFRYTLIS). The chain crosses the membrane as a helical span at residues 213-230 (VRAVIISAVAANIVFRVI). Over 231–250 (NGQDAVITMPQYDAPELSTL) the chain is Periplasmic. The chain crosses the membrane as a helical span at residues 251–279 (GLFLLLGALFGVFGVLFNYLITLAQDLFV). Residues 280–285 (KFHRND) are Cytoplasmic-facing. A helical transmembrane segment spans residues 286 to 307 (RKRYLLTGSMIGGCFGLLLLYV). Topologically, residues 308 to 327 (PELTGGGISLIPTITNGGYG) are periplasmic. Helical transmembrane passes span 328 to 347 (AGIL…LCFG) and 353 to 374 (GIFA…LIAK). The Selectivity filter part_3 motif lies at 353-357 (GIFAP). Residues I354 and F355 each contribute to the chloride site. Residues 375–384 (VWFPELNIEP) are Periplasmic-facing. The helical intramembrane region spans 385 to 399 (GMFAIAGMGALFAAT). The note=Loop between two helices intramembrane region spans 400–402 (VRA). Positions 403-414 (PITGILLVIEMT) form an intramembrane region, helical. The note=Loop between two helices intramembrane region spans 415–419 (NNYHL). Residues 420–436 (ILPLIITSLGAVIFAQL) form a helical membrane-spanning segment. Residues 437–468 (LGGQPIYSQLLHRTLKNQKLQQQDLPPQSPNS) lie on the Cytoplasmic side of the membrane. Y443 contributes to the chloride binding site.

This sequence belongs to the chloride channel (TC 2.A.49) family. ClcA subfamily. In terms of assembly, homodimer.

It localises to the cell inner membrane. It catalyses the reaction 2 chloride(in) + H(+)(out) = 2 chloride(out) + H(+)(in). In terms of biological role, proton-coupled chloride transporter. Functions as antiport system and exchanges two chloride ions for 1 proton. Probably acts as an electrical shunt for an outwardly-directed proton pump that is linked to amino acid decarboxylation, as part of the extreme acid resistance (XAR) response. In Vibrio cholerae serotype O1 (strain ATCC 39541 / Classical Ogawa 395 / O395), this protein is H(+)/Cl(-) exchange transporter ClcA.